The primary structure comprises 310 residues: TLC domain-containing protein 2 (310 aa).

Helical transmembrane passes span 6-26 (LLVA…LQLL), 40-60 (NIFV…VGLW), 79-99 (VLVA…LWNQ), 117-137 (CLST…SLLL), 167-187 (ASLA…SLWL), and 194-214 (LSLA…SISI). The 195-residue stretch at 33-227 (RDRWMWRNIF…IRILTKDILQ (195 aa)) folds into the TLC domain.

The protein belongs to the TLCD family.

It localises to the cell membrane. In terms of biological role, regulates the composition and fluidity of the plasma membrane. Inhibits the incorporation of membrane-fluidizing phospholipids containing omega-3 long-chain polyunsaturated fatty acids (LCPUFA) and thereby promotes membrane rigidity. Does not appear to have any effect on LCPUFA synthesis. The polypeptide is TLC domain-containing protein 2 (Tlcd2) (Mus musculus (Mouse)).